A 143-amino-acid polypeptide reads, in one-letter code: Large ribosomal subunit protein uL11 (143 aa).

Belongs to the universal ribosomal protein uL11 family. Part of the ribosomal stalk of the 50S ribosomal subunit. Interacts with L10 and the large rRNA to form the base of the stalk. L10 forms an elongated spine to which L12 dimers bind in a sequential fashion forming a multimeric L10(L12)X complex. In terms of processing, one or more lysine residues are methylated.

In terms of biological role, forms part of the ribosomal stalk which helps the ribosome interact with GTP-bound translation factors. The protein is Large ribosomal subunit protein uL11 of Methylibium petroleiphilum (strain ATCC BAA-1232 / LMG 22953 / PM1).